Reading from the N-terminus, the 669-residue chain is Threonine--tRNA ligase (669 aa).

A TGS domain is found at 3-60; it reads DAQQITLIVDGEETKVTEGTTGAELFFERRDVVVARVNGVLKDLDQVLTEGADVEGVT. The catalytic stretch occupies residues 260–566; the sequence is DHRKLGVELD…LTEHYAGAFP (307 aa). Residues cysteine 365, histidine 416, and histidine 543 each coordinate Zn(2+).

This sequence belongs to the class-II aminoacyl-tRNA synthetase family. In terms of assembly, homodimer. Zn(2+) serves as cofactor.

It localises to the cytoplasm. It catalyses the reaction tRNA(Thr) + L-threonine + ATP = L-threonyl-tRNA(Thr) + AMP + diphosphate + H(+). Its function is as follows. Catalyzes the attachment of threonine to tRNA(Thr) in a two-step reaction: L-threonine is first activated by ATP to form Thr-AMP and then transferred to the acceptor end of tRNA(Thr). Also edits incorrectly charged L-seryl-tRNA(Thr). The polypeptide is Threonine--tRNA ligase (Paenarthrobacter aurescens (strain TC1)).